We begin with the raw amino-acid sequence, 425 residues long: Putative integrase/recombinase y4rF (425 aa).

The Core-binding (CB) domain maps to Asp123 to Cys210. In terms of domain architecture, Tyr recombinase spans His233–Leu418. Active-site residues include Arg273, Lys298, His370, Arg373, and His396. Catalysis depends on Tyr405, which acts as the O-(3'-phospho-DNA)-tyrosine intermediate.

It belongs to the 'phage' integrase family.

The polypeptide is Putative integrase/recombinase y4rF (Sinorhizobium fredii (strain NBRC 101917 / NGR234)).